The chain runs to 147 residues: MHRQFLSSCCQNLFFKFKLLLFEVNQMQYVYIFIGGALGALLRYLISFLNTDGGFPIGTLIANLTGAFVMGLLTALTIAFFSNHPTLKKAITTGFLGALTTFSTFQLELIHMFDHQQFITLLLYAVTSYVFGILLCYVGIKLGGGLS.

4 consecutive transmembrane segments (helical) span residues 29 to 49, 61 to 81, 90 to 110, and 118 to 138; these read YVYI…ISFL, IANL…IAFF, AITT…LELI, and FITL…LCYV. Glycine 97 and threonine 100 together coordinate Na(+).

This sequence belongs to the fluoride channel Fluc/FEX (TC 1.A.43) family.

The protein localises to the cell membrane. It carries out the reaction fluoride(in) = fluoride(out). Its activity is regulated as follows. Na(+) is not transported, but it plays an essential structural role and its presence is essential for fluoride channel function. Functionally, fluoride-specific ion channel. Important for reducing fluoride concentration in the cell, thus reducing its toxicity. In Staphylococcus aureus (strain Mu50 / ATCC 700699), this protein is Fluoride-specific ion channel FluC 1.